Reading from the N-terminus, the 118-residue chain is Basic phospholipase A2 CM-II (118 aa).

7 disulfide bridges follow: cysteine 11-cysteine 70, cysteine 26-cysteine 117, cysteine 28-cysteine 44, cysteine 43-cysteine 98, cysteine 50-cysteine 91, cysteine 59-cysteine 84, and cysteine 77-cysteine 89. Tyrosine 27, glycine 29, and glycine 31 together coordinate Ca(2+). Histidine 47 is an active-site residue. Aspartate 48 contacts Ca(2+). The active site involves aspartate 92.

The protein belongs to the phospholipase A2 family. Group I subfamily. D49 sub-subfamily. It depends on Ca(2+) as a cofactor. As to expression, expressed by the venom gland.

The protein resides in the secreted. It catalyses the reaction a 1,2-diacyl-sn-glycero-3-phosphocholine + H2O = a 1-acyl-sn-glycero-3-phosphocholine + a fatty acid + H(+). In terms of biological role, snake venom phospholipase A2 (PLA2) that causes myonecrosis when injected intramuscularly, causes neuromuscular blockade with a gradual contracture and a decreased sensitivity to ACh and KCl (in the chick biventer cervicis nerve-muscle preparation), abolishes twitches evoked by indirect stimulation earlier than those by direct stimulation (in the mouse phrenic nerve-diaphragm preparation), shows indirect hemolytic activity, and shows weak anticoagulant activity. PLA2 catalyzes the calcium-dependent hydrolysis of the 2-acyl groups in 3-sn-phosphoglycerides. The sequence is that of Basic phospholipase A2 CM-II from Naja mossambica (Mozambique spitting cobra).